The chain runs to 86 residues: Large ribosomal subunit protein bL31B (86 aa).

It belongs to the bacterial ribosomal protein bL31 family. Type B subfamily. Part of the 50S ribosomal subunit.

The sequence is that of Large ribosomal subunit protein bL31B from Vibrio vulnificus (strain CMCP6).